The primary structure comprises 251 residues: MLAKRIVPCLDIKDGKTVKGINFVNFRDAGDPVELGAQYSREGADELVYLDITASHEGRKTFTELVKQVAAHISIPFTVGGGINELKDVDRLLSAGADKVSINSAALRNPALIEEIAKNFGSQVCVVAIDANFENNDWLCYLNGGRVPTDKYLFQWASEAESRGAGEILFTSMTHDGVKDGYANDALATLADTLHIPVIASGGAGKMEHFRDTFSNGKAGAALAASVFHFGEIRISDLKQYLKDEGINVRI.

Residues D11 and D130 contribute to the active site.

The protein belongs to the HisA/HisF family. Heterodimer of HisH and HisF.

The protein resides in the cytoplasm. The enzyme catalyses 5-[(5-phospho-1-deoxy-D-ribulos-1-ylimino)methylamino]-1-(5-phospho-beta-D-ribosyl)imidazole-4-carboxamide + L-glutamine = D-erythro-1-(imidazol-4-yl)glycerol 3-phosphate + 5-amino-1-(5-phospho-beta-D-ribosyl)imidazole-4-carboxamide + L-glutamate + H(+). Its pathway is amino-acid biosynthesis; L-histidine biosynthesis; L-histidine from 5-phospho-alpha-D-ribose 1-diphosphate: step 5/9. Its function is as follows. IGPS catalyzes the conversion of PRFAR and glutamine to IGP, AICAR and glutamate. The HisF subunit catalyzes the cyclization activity that produces IGP and AICAR from PRFAR using the ammonia provided by the HisH subunit. The protein is Imidazole glycerol phosphate synthase subunit HisF of Parabacteroides distasonis (strain ATCC 8503 / DSM 20701 / CIP 104284 / JCM 5825 / NCTC 11152).